A 427-amino-acid chain; its full sequence is Glutamate-1-semialdehyde 2,1-aminomutase (427 aa).

N6-(pyridoxal phosphate)lysine is present on lysine 265.

This sequence belongs to the class-III pyridoxal-phosphate-dependent aminotransferase family. HemL subfamily. In terms of assembly, homodimer. Requires pyridoxal 5'-phosphate as cofactor.

It localises to the cytoplasm. The catalysed reaction is (S)-4-amino-5-oxopentanoate = 5-aminolevulinate. Its pathway is porphyrin-containing compound metabolism; protoporphyrin-IX biosynthesis; 5-aminolevulinate from L-glutamyl-tRNA(Glu): step 2/2. In Pseudomonas putida (strain GB-1), this protein is Glutamate-1-semialdehyde 2,1-aminomutase.